The sequence spans 231 residues: uncharacterized protein (231 aa).

Val-10–Val-34 provides a ligand contact to NADP(+). Residue Ser-140 coordinates substrate. Tyr-153 acts as the Proton acceptor in catalysis.

This sequence belongs to the short-chain dehydrogenases/reductases (SDR) family.

This is an uncharacterized protein from Staphylococcus aureus (strain N315).